Here is a 490-residue protein sequence, read N- to C-terminus: Arginine decarboxylase (490 aa).

The residue at position 226 (Lys226) is an N6-(pyridoxal phosphate)lysine.

Belongs to the Orn/Lys/Arg decarboxylase class-I family. The cofactor is pyridoxal 5'-phosphate.

Its subcellular location is the cytoplasm. The enzyme catalyses L-arginine + H(+) = agmatine + CO2. It functions in the pathway amine and polyamine biosynthesis; agmatine biosynthesis; agmatine from L-arginine: step 1/1. Its function is as follows. Catalyzes the formation of agmatine from arginine. The sequence is that of Arginine decarboxylase (speA) from Bacillus subtilis (strain 168).